A 441-amino-acid polypeptide reads, in one-letter code: Tubulin alpha chain (441 aa).

GTP-binding residues include Q11, E68, S137, G141, T142, T176, N203, and N224. Position 68 (E68) interacts with Mg(2+). The active site involves E250.

This sequence belongs to the tubulin family. In terms of assembly, dimer of alpha and beta chains. A typical microtubule is a hollow water-filled tube with an outer diameter of 25 nm and an inner diameter of 15 nM. Alpha-beta heterodimers associate head-to-tail to form protofilaments running lengthwise along the microtubule wall with the beta-tubulin subunit facing the microtubule plus end conferring a structural polarity. Microtubules usually have 13 protofilaments but different protofilament numbers can be found in some organisms and specialized cells. It depends on Mg(2+) as a cofactor.

It localises to the cytoplasm. The protein resides in the cytoskeleton. The catalysed reaction is GTP + H2O = GDP + phosphate + H(+). Its function is as follows. Tubulin is the major constituent of microtubules, a cylinder consisting of laterally associated linear protofilaments composed of alpha- and beta-tubulin heterodimers. Microtubules grow by the addition of GTP-tubulin dimers to the microtubule end, where a stabilizing cap forms. Below the cap, tubulin dimers are in GDP-bound state, owing to GTPase activity of alpha-tubulin. This Encephalitozoon cuniculi (strain GB-M1) (Microsporidian parasite) protein is Tubulin alpha chain (TUB1).